Here is a 321-residue protein sequence, read N- to C-terminus: Tetraacyldisaccharide 4'-kinase (321 aa).

Residue serine 54–threonine 61 coordinates ATP.

It belongs to the LpxK family.

It catalyses the reaction a lipid A disaccharide + ATP = a lipid IVA + ADP + H(+). It functions in the pathway glycolipid biosynthesis; lipid IV(A) biosynthesis; lipid IV(A) from (3R)-3-hydroxytetradecanoyl-[acyl-carrier-protein] and UDP-N-acetyl-alpha-D-glucosamine: step 6/6. Functionally, transfers the gamma-phosphate of ATP to the 4'-position of a tetraacyldisaccharide 1-phosphate intermediate (termed DS-1-P) to form tetraacyldisaccharide 1,4'-bis-phosphate (lipid IVA). This chain is Tetraacyldisaccharide 4'-kinase, found in Rickettsia peacockii (strain Rustic).